The sequence spans 146 residues: uncharacterized protein (146 aa).

Positions 1 to 26 are cleaved as a signal peptide; the sequence is MQFRPSIALVLSIVGILSLEISWTDG.

Prismatic layer of shell (at protein level). Expressed primarily in the mantle with highest level in the mantle edge and lower level in the mantle pallium.

It localises to the secreted. This is an uncharacterized protein from Margaritifera margaritifera (Freshwater pearl mussel).